The primary structure comprises 240 residues: Ribosomal RNA large subunit methyltransferase E (240 aa).

Over residues 1–20 (MSKAGGNKGGVKTGGRGGAG) the composition is skewed to gly residues. A disordered region spans residues 1–27 (MSKAGGNKGGVKTGGRGGAGSSNLQVR). S-adenosyl-L-methionine is bound by residues Gly92, Trp94, Asp115, Asp131, and Asp155. Lys195 acts as the Proton acceptor in catalysis.

This sequence belongs to the class I-like SAM-binding methyltransferase superfamily. RNA methyltransferase RlmE family.

The protein resides in the cytoplasm. It carries out the reaction uridine(2552) in 23S rRNA + S-adenosyl-L-methionine = 2'-O-methyluridine(2552) in 23S rRNA + S-adenosyl-L-homocysteine + H(+). Specifically methylates the uridine in position 2552 of 23S rRNA at the 2'-O position of the ribose in the fully assembled 50S ribosomal subunit. In Brucella anthropi (strain ATCC 49188 / DSM 6882 / CCUG 24695 / JCM 21032 / LMG 3331 / NBRC 15819 / NCTC 12168 / Alc 37) (Ochrobactrum anthropi), this protein is Ribosomal RNA large subunit methyltransferase E.